A 182-amino-acid polypeptide reads, in one-letter code: Adenylate kinase (182 aa).

12-17 provides a ligand contact to ATP; the sequence is GAGKGT. Residues 32–61 are NMP; that stretch reads STGELLRKEIDLDTYLGKQVKDIMNKGELV. Residues Thr33, Arg38, 59 to 61, 85 to 88, and Gln92 contribute to the AMP site; these read ELV and GYPR. Residues 126–132 form an LID region; that stretch reads LRGRKDD. Residue Arg127 participates in ATP binding. 2 residues coordinate AMP: Arg129 and Arg140. Gly168 provides a ligand contact to ATP.

This sequence belongs to the adenylate kinase family. Monomer.

The protein resides in the cytoplasm. It catalyses the reaction AMP + ATP = 2 ADP. The protein operates within purine metabolism; AMP biosynthesis via salvage pathway; AMP from ADP: step 1/1. Catalyzes the reversible transfer of the terminal phosphate group between ATP and AMP. Plays an important role in cellular energy homeostasis and in adenine nucleotide metabolism. In Prochlorococcus marinus (strain MIT 9515), this protein is Adenylate kinase.